Here is a 337-residue protein sequence, read N- to C-terminus: Ribosomal RNA small subunit methyltransferase H (337 aa).

Residues 33–35, Asp-53, Asp-101, and Gln-108 each bind S-adenosyl-L-methionine; that span reads AGH.

This sequence belongs to the methyltransferase superfamily. RsmH family.

The protein localises to the cytoplasm. It catalyses the reaction cytidine(1402) in 16S rRNA + S-adenosyl-L-methionine = N(4)-methylcytidine(1402) in 16S rRNA + S-adenosyl-L-homocysteine + H(+). Its function is as follows. Specifically methylates the N4 position of cytidine in position 1402 (C1402) of 16S rRNA. This is Ribosomal RNA small subunit methyltransferase H from Herpetosiphon aurantiacus (strain ATCC 23779 / DSM 785 / 114-95).